The primary structure comprises 468 residues: Phosphatidylglycerol--prolipoprotein diacylglyceryl transferase (468 aa).

Transmembrane regions (helical) follow at residues 21-41 (LPVR…LLIG), 56-76 (YDIA…YHLA), and 96-116 (IWDG…GAWI). Arg144 contacts a 1,2-diacyl-sn-glycero-3-phospho-(1'-sn-glycerol). The next 3 helical transmembrane spans lie at 192 to 212 (VVQP…VALI), 218 to 238 (FIIG…AGRF), and 256 to 276 (INSF…ILAP). The interval 349–468 (VVQVADRDGE…RWWRLRRRRQ (120 aa)) is disordered. The span at 391–406 (AEAASAAPEEPAALAS) shows a compositional bias: low complexity. A compositionally biased stretch (basic and acidic residues) spans 445 to 455 (DGIRRQDDFSS). The span at 456-468 (RRRRWWRLRRRRQ) shows a compositional bias: basic residues.

Belongs to the Lgt family.

The protein localises to the cell membrane. The catalysed reaction is L-cysteinyl-[prolipoprotein] + a 1,2-diacyl-sn-glycero-3-phospho-(1'-sn-glycerol) = an S-1,2-diacyl-sn-glyceryl-L-cysteinyl-[prolipoprotein] + sn-glycerol 1-phosphate + H(+). It participates in protein modification; lipoprotein biosynthesis (diacylglyceryl transfer). Catalyzes the transfer of the diacylglyceryl group from phosphatidylglycerol to the sulfhydryl group of the N-terminal cysteine of a prolipoprotein, the first step in the formation of mature lipoproteins. This Mycobacterium bovis (strain ATCC BAA-935 / AF2122/97) protein is Phosphatidylglycerol--prolipoprotein diacylglyceryl transferase.